Reading from the N-terminus, the 1477-residue chain is FHA domain-containing protein PS1 (1477 aa).

In terms of domain architecture, FHA spans Leu64–Ile115. Disordered stretches follow at residues Glu188–Thr218, Leu588–Phe644, Pro789–Phe818, Leu832–Ser911, Ala942–Val979, Ile1004–Leu1030, and Val1159–Ser1225. The segment covering Gly589 to Gln607 has biased composition (basic and acidic residues). Residues Leu832 to Pro849 are compositionally biased toward polar residues. A compositionally biased stretch (low complexity) spans Gln870–Glu883. Polar residues-rich tracts occupy residues Asn885–Ile897, Leu957–Glu971, Asn1007–Arg1018, and Ser1198–Ala1212. Residues Ser1213–Ser1225 show a composition bias toward low complexity.

Required for normal spindle orientation at male meiosis II and normal formation of tetrad of microspores. Not involved in female meiosis. The chain is FHA domain-containing protein PS1 from Arabidopsis thaliana (Mouse-ear cress).